The chain runs to 352 residues: C-C chemokine receptor type 5 (352 aa).

Residues 1-30 are Extracellular-facing; that stretch reads MDYQVSSPTYDIDYDTSEPCQKINVKQIAA. A Sulfotyrosine modification is found at Tyr3. 2 O-linked (GalNAc...) serine glycosylation sites follow: Ser6 and Ser7. Sulfotyrosine occurs at positions 10 and 14. Disulfide bonds link Cys20/Cys269 and Cys101/Cys178. Residues 31–58 traverse the membrane as a helical segment; the sequence is RLLPPLYSLVFIFGFVGNMLVILVLINC. Over 59-68 the chain is Cytoplasmic; that stretch reads KRLKSMTDIY. Residues 69 to 89 traverse the membrane as a helical segment; sequence LLNLAISDLFFLLTVPFWAHY. Residues 90 to 102 are Extracellular-facing; that stretch reads AAAQWDFGNTMCQ. The helical transmembrane segment at 103–124 threads the bilayer; the sequence is LLTGLYFIGFFSGIFFIILLTI. The Cytoplasmic portion of the chain corresponds to 125 to 141; the sequence is DRYLAIVHAVFALKART. Residues 142 to 166 traverse the membrane as a helical segment; that stretch reads VTFGVVTSVITWVVAVFASLPGIIF. Topologically, residues 167–198 are extracellular; sequence TRSQKEGLHYTCSSHFPYSQYQFWKNFQTLKI. The chain crosses the membrane as a helical span at residues 199-218; the sequence is VILGLVLPLLVMVICYSGIL. The Cytoplasmic portion of the chain corresponds to 219-235; it reads KTLLRCRNEKKRHRAVR. Residues 236–260 traverse the membrane as a helical segment; the sequence is LIFTIMIVYFLFWAPYNIVLLLNTF. Over 261–277 the chain is Extracellular; that stretch reads QEFFGLNNCSSSNRLDQ. The helical transmembrane segment at 278-301 threads the bilayer; it reads AMQVTETLGMTHCCINPIIYAFVG. The Cytoplasmic segment spans residues 302–352; the sequence is EKFRNYLLVFFQKHIAKHFCKCCSIFQQEAPERASSVYTRSTGEQEISVGL. Residues Cys321, Cys323, and Cys324 are each lipidated (S-palmitoyl cysteine). Residues Ser336, Ser337, Ser342, and Ser349 each carry the phosphoserine; by BARK1 modification.

Belongs to the G-protein coupled receptor 1 family. In terms of assembly, interacts with PRAF2. Efficient ligand binding to CCL3/MIP-1alpha and CCL4/MIP-1beta requires sulfation, O-glycosylation and sialic acid modifications. Glycosylation on Ser-6 is required for efficient binding of CCL4. Interacts with GRK2. Interacts with ARRB1 and ARRB2. Interacts with CNIH4. Interacts with S100A4; this interaction stimulates T-lymphocyte chemotaxis. In terms of processing, sulfated on at least 2 of the N-terminal tyrosines. Sulfation is required for efficient binding of the chemokines, CCL3 and CCL4. Post-translationally, palmitoylation in the C-terminal is important for cell surface expression. Phosphorylation on serine residues in the C-terminal is stimulated by binding CC chemokines especially by APO-RANTES. In terms of processing, O-glycosylated, but not N-glycosylated. Ser-6 appears to be the major site even if Ser-7 may be also O-glycosylated. Also sialylated glycans present which contribute to chemokine binding. Thr-16 and Ser-17 may also be glycosylated and, if so, with small moieties such as a T-antigen.

The protein resides in the cell membrane. Functionally, receptor for a number of inflammatory CC-chemokines including CCL3/MIP-1-alpha, CCL4/MIP-1-beta and RANTES and subsequently transduces a signal by increasing the intracellular calcium ion level. May play a role in the control of granulocytic lineage proliferation or differentiation. Participates in T-lymphocyte migration to the infection site by acting as a chemotactic receptor. The polypeptide is C-C chemokine receptor type 5 (CCR5) (Nomascus leucogenys (Northern white-cheeked gibbon)).